Here is a 497-residue protein sequence, read N- to C-terminus: Serine/threonine-protein kinase 3 (497 aa).

At methionine 1 the chain carries N-acetylmethionine. The tract at residues 1–20 is disordered; the sequence is MEQPPASKSKLKKLSEDSLT. At serine 15 the chain carries Phosphoserine. The Protein kinase domain occupies 27–278; the sequence is FDVLEKLGEG…ATQLLQHPFI (252 aa). Residues 33–41 and lysine 56 contribute to the ATP site; that span reads LGEGSYGSV. Threonine 117 is subject to Phosphothreonine; by PKB/AKT1. The Proton acceptor role is filled by aspartate 146. Positions 151 and 164 each coordinate Mg(2+). Threonine 180 is subject to Phosphothreonine; by autocatalysis. The stretch at 287–328 forms a coiled coil; the sequence is LRDLIAEAMEIKAKRHEEQQRELEEEEENSDEDELDSHTMVK. 2 disordered regions span residues 301-343 and 368-394; these read RHEE…TSTM and NSEEEEEEEEEEEEDGTMKRNATSPQV. Acidic residues predominate over residues 309-321; that stretch reads LEEEEENSDEDEL. Serine 316 is subject to Phosphoserine. Positions 326-343 are enriched in polar residues; the sequence is MVKTSSESVGTMRATSTM. Threonine 336 carries the post-translational modification Phosphothreonine. Positions 366 to 387 form a coiled coil; the sequence is VINSEEEEEEEEEEEEDGTMKR. Over residues 369-382 the composition is skewed to acidic residues; that stretch reads SEEEEEEEEEEEED. Threonine 384 is subject to Phosphothreonine. A Phosphothreonine; by PKB/AKT1 modification is found at threonine 390. Serine 391 and serine 450 each carry phosphoserine. Residues 443 to 490 enclose the SARAH domain; it reads FDFLKNLSLEELQMRLKALDPMMEREIEELHQRYSAKRQPILDAMDAK. Positions 448–479 form a coiled coil; it reads NLSLEELQMRLKALDPMMEREIEELHQRYSAK.

Belongs to the protein kinase superfamily. STE Ser/Thr protein kinase family. STE20 subfamily. In terms of assembly, homodimer; mediated via the coiled-coil region. Interacts with NORE1, which inhibits autoactivation. Interacts with and stabilizes SAV1. Interacts with RAF1, which prevents dimerization and phosphorylation. Interacts with RASSF1. Interacts (via SARAH domain) with isoform 1 of NEK2. Interacts with ESR1 only in the presence of SAV1. Interacts with PKB/AKT1. Forms a tripartite complex with MOBKL1B and STK38. Interacts with RASSF2 (via SARAH domain). Interacts with DLG5 (via PDZ domain 3). Interacts with LATS1; this interaction is inhibited in the presence of DLG5. Interacts with MARK3 in the presence of DLG5. Interacts with RASSF5; this interaction inhibits STK3 autoactivation through heterodimerization. Interacts (when phosphorylated) with SLMAP (via FHA domain); the interaction associates STK3 with the STRIPAK complex. Requires Mg(2+) as cofactor. Autophosphorylated on two residues Thr-174 and Thr-180, leading to activation. Phosphorylation at Thr-117 and Thr-390 by PKB/AKT1, leads to inhibition of its: cleavage, kinase activity, autophosphorylation at Thr-180, binding to RASSF1 and nuclear translocation, and increase in its binding to RAF1. Phosphorylated at Ser-15 by PLK1, leading to activation. Post-translationally, proteolytically cleaved by caspase-3 during apoptosis. Proteolytic cleavage results in kinase activation and nuclear translocation of the truncated form (MST1/N). In terms of processing, ubiquitinated by TRIM69; leading to its redistribution to the perinuclear cytoskeleton.

It localises to the cytoplasm. The protein localises to the nucleus. It catalyses the reaction L-seryl-[protein] + ATP = O-phospho-L-seryl-[protein] + ADP + H(+). It carries out the reaction L-threonyl-[protein] + ATP = O-phospho-L-threonyl-[protein] + ADP + H(+). Its activity is regulated as follows. Inhibited by the C-terminal non-catalytic region. Activated by caspase-cleavage. Full activation also requires homodimerization and autophosphorylation of Thr-180, which are inhibited by the proto-oncogene product RAF1. Activated by RASSF1 which acts by preventing its dephosphorylation. When autophosphorylated at Thr-180, recruits STRIPAK complex and promotes PP2A-mediated dephosphorylation and inactivation of STK3. Its function is as follows. Stress-activated, pro-apoptotic kinase which, following caspase-cleavage, enters the nucleus and induces chromatin condensation followed by internucleosomal DNA fragmentation. Key component of the Hippo signaling pathway which plays a pivotal role in organ size control and tumor suppression by restricting proliferation and promoting apoptosis. The core of this pathway is composed of a kinase cascade wherein STK3/MST2 and STK4/MST1, in complex with its regulatory protein SAV1, phosphorylates and activates LATS1/2 in complex with its regulatory protein MOB1, which in turn phosphorylates and inactivates YAP1 oncoprotein and WWTR1/TAZ. Phosphorylation of YAP1 by LATS2 inhibits its translocation into the nucleus to regulate cellular genes important for cell proliferation, cell death, and cell migration. STK3/MST2 and STK4/MST1 are required to repress proliferation of mature hepatocytes, to prevent activation of facultative adult liver stem cells (oval cells), and to inhibit tumor formation. Phosphorylates NKX2-1. Phosphorylates NEK2 and plays a role in centrosome disjunction by regulating the localization of NEK2 to centrosomes, and its ability to phosphorylate CROCC and CEP250. In conjunction with SAV1, activates the transcriptional activity of ESR1 through the modulation of its phosphorylation. Positively regulates RAF1 activation via suppression of the inhibitory phosphorylation of RAF1 on 'Ser-259'. Phosphorylates MOBKL1A and RASSF2. Phosphorylates MOBKL1B on 'Thr-74'. Acts cooperatively with MOBKL1B to activate STK38. This Mus musculus (Mouse) protein is Serine/threonine-protein kinase 3 (Stk3).